The primary structure comprises 467 residues: Squalene synthase (467 aa).

The protein belongs to the phytoene/squalene synthase family. It depends on Mg(2+) as a cofactor.

It carries out the reaction 2 (2E,6E)-farnesyl diphosphate + NADPH + H(+) = squalene + 2 diphosphate + NADP(+). It catalyses the reaction 2 (2E,6E)-farnesyl diphosphate + NADH + H(+) = squalene + 2 diphosphate + NAD(+). It participates in terpene metabolism; lanosterol biosynthesis; lanosterol from farnesyl diphosphate: step 1/3. Functionally, squalene synthase; part of the third module of ergosterol biosynthesis pathway that includes the late steps of the pathway. The third module or late pathway involves the ergosterol synthesis itself through consecutive reactions that mainly occur in the endoplasmic reticulum (ER) membrane. Firstly, the squalene synthase SQS catalyzes the condensation of 2 farnesyl pyrophosphate moieties to form squalene, which is the precursor of all steroids. Secondly, the squalene epoxidase catalyzes the stereospecific oxidation of squalene to (S)-2,3-epoxysqualene, which is considered to be a rate-limiting enzyme in steroid biosynthesis. Then, the lanosterol synthase LS catalyzes the cyclization of (S)-2,3 oxidosqualene to lanosterol, a reaction that forms the sterol core. In the next steps, lanosterol is transformed to ergosterol via a complex process involving various demethylation, reduction and desaturation reactions. Lanosterol is also an intermediate in the biosynthesis of triterpenes such as ganoderic acids (GA), a group of highly oxygenated lanostane-type triterpenoids which are well recognized as a main group of unique bioactive compounds in the medicinal mushroom Ganoderma lucidum. This chain is Squalene synthase, found in Ganoderma lucidum (Ling zhi medicinal fungus).